Here is a 523-residue protein sequence, read N- to C-terminus: Non-specific phospholipase C3 (523 aa).

Positions 44–64 (DGVSESEPRSNPLSTSDPNSA) are disordered. The span at 52–64 (RSNPLSTSDPNSA) shows a compositional bias: polar residues.

This sequence belongs to the bacterial phospholipase C family. In terms of tissue distribution, expressed in root tips, cotyledons, on leaf margins, stems, young anthers and funiculus.

The enzyme catalyses a 1-acyl-sn-glycero-3-phosphate + H2O = a 1-acyl-sn-glycerol + phosphate. In terms of biological role, possesses specific phosphatase activity toward lysophosphatidic acid (LPA) in vitro. Does not show phospholipase C activity. May play a role in signal transduction and storage lipid synthesis. May be involved in brassinolide-mediated signaling in root development. The sequence is that of Non-specific phospholipase C3 (NPC3) from Arabidopsis thaliana (Mouse-ear cress).